The chain runs to 122 residues: Large ribosomal subunit protein uL22 (122 aa).

Positions 102–122 (VAEGKEMKSSKSHKKNQAEGK) are disordered.

Belongs to the universal ribosomal protein uL22 family. In terms of assembly, part of the 50S ribosomal subunit.

Functionally, this protein binds specifically to 23S rRNA; its binding is stimulated by other ribosomal proteins, e.g. L4, L17, and L20. It is important during the early stages of 50S assembly. It makes multiple contacts with different domains of the 23S rRNA in the assembled 50S subunit and ribosome. In terms of biological role, the globular domain of the protein is located near the polypeptide exit tunnel on the outside of the subunit, while an extended beta-hairpin is found that lines the wall of the exit tunnel in the center of the 70S ribosome. This Helicobacter pylori (strain G27) protein is Large ribosomal subunit protein uL22.